The chain runs to 52 residues: UPF0391 membrane protein ABAYE0050 (52 aa).

Helical transmembrane passes span 6 to 26 (IIFAVIALIASLLGFGGVAGL) and 30 to 50 (FAVILLVIAVILAVIGFISRG).

Belongs to the UPF0391 family.

It is found in the cell membrane. This chain is UPF0391 membrane protein ABAYE0050, found in Acinetobacter baumannii (strain AYE).